Consider the following 283-residue polypeptide: Large ribosomal subunit protein mL46 (283 aa).

Lys-217 bears the N6-succinyllysine mark. Lys-228 carries the N6-acetyllysine modification. Lys-246 bears the N6-succinyllysine mark.

It belongs to the mitochondrion-specific ribosomal protein mL46 family. Component of the mitochondrial ribosome large subunit (39S) which comprises a 16S rRNA and about 50 distinct proteins.

It localises to the mitochondrion. The sequence is that of Large ribosomal subunit protein mL46 (Mrpl46) from Mus musculus (Mouse).